The following is a 273-amino-acid chain: ATP synthase subunit a (273 aa).

Helical transmembrane passes span 42–62 (TLNI…LFIF), 102–122 (VIAP…MMDL), 148–168 (DVSI…FYSI), 213–233 (LFGN…LLPW), and 244–264 (AIFH…LTIV).

Belongs to the ATPase A chain family. In terms of assembly, F-type ATPases have 2 components, CF(1) - the catalytic core - and CF(0) - the membrane proton channel. CF(1) has five subunits: alpha(3), beta(3), gamma(1), delta(1), epsilon(1). CF(0) has three main subunits: a(1), b(2) and c(9-12). The alpha and beta chains form an alternating ring which encloses part of the gamma chain. CF(1) is attached to CF(0) by a central stalk formed by the gamma and epsilon chains, while a peripheral stalk is formed by the delta and b chains.

The protein resides in the cell inner membrane. In terms of biological role, key component of the proton channel; it plays a direct role in the translocation of protons across the membrane. The chain is ATP synthase subunit a from Serratia proteamaculans (strain 568).